A 1791-amino-acid polypeptide reads, in one-letter code: Brefeldin A-inhibited guanine nucleotide-exchange protein 2 (1791 aa).

N-acetylmethionine is present on methionine 1. The interval 2–224 (QESQTKSMFV…KPQSPVIQAT (223 aa)) is DCB; DCB:DCB domain and DCB:HUS domain interaction. 2 disordered regions span residues 208–292 (LEKP…DNGA) and 311–350 (AAEK…IADD). Phosphoserine is present on residues serine 214, serine 218, and serine 227. The span at 214 to 225 (SKPQSPVIQATA) shows a compositional bias: polar residues. A compositionally biased stretch (polar residues) spans 233–243 (LKQSQAQSKPT). Threonine 244 bears the Phosphothreonine mark. Residues 244–257 (TPEKTELPNGDHAR) are compositionally biased toward basic and acidic residues. Serine 277 carries the phosphoserine modification. 2 positions are modified to phosphoserine: serine 355 and serine 356. Positions 515-535 (ADAQCVVDIYVNYDCDLNAAN) are HUS; DCB:HUS domain interaction. Serine 621 is modified (phosphoserine). A Phosphothreonine modification is found at threonine 623. Serine 624 carries the post-translational modification Phosphoserine. Threonine 633 is modified (phosphothreonine). The region spanning 661 to 792 (FNKKPKRGIQ…IIMLTTDLHS (132 aa)) is the SEC7 domain. Phosphoserine occurs at positions 707, 1518, 1520, 1521, 1532, 1535, 1541, and 1788.

As to quaternary structure, homodimer. Interacts with ARFGEF1/BIG1; both proteins are probably part of the same or very similar macromolecular complexes. Interacts with PRKAR1A, PRKAR2A, PRKAR1B, PRKAR2B, PPP1CC, PDE3A, TNFRSF1A, MYCBP and EXOC7. Interacts with GABRB1, GABRB2 and GABRB3. In terms of processing, in vitro phosphorylated by PKA reducing its GEF activity and dephosphorylated by phosphatase PP1. Expressed in brain (at protein level).

Its subcellular location is the cytoplasm. It localises to the membrane. It is found in the golgi apparatus. The protein resides in the perinuclear region. The protein localises to the trans-Golgi network. Its subcellular location is the endosome. It localises to the cytoskeleton. It is found in the microtubule organizing center. The protein resides in the centrosome. The protein localises to the cell projection. Its subcellular location is the dendrite. It localises to the cytoplasmic vesicle. It is found in the synapse. With respect to regulation, inhibited by brefeldin A. In terms of biological role, promotes guanine-nucleotide exchange on ARF1 and ARF3 and to a lower extent on ARF5 and ARF6. Promotes the activation of ARF1/ARF5/ARF6 through replacement of GDP with GTP. Involved in the regulation of Golgi vesicular transport. Required for the integrity of the endosomal compartment. Involved in trafficking from the trans-Golgi network (TGN) to endosomes and is required for membrane association of the AP-1 complex and GGA1. Seems to be involved in recycling of the transferrin receptor from recycling endosomes to the plasma membrane. Probably is involved in the exit of GABA(A) receptors from the endoplasmic reticulum. Involved in constitutive release of tumor necrosis factor receptor 1 via exosome-like vesicles; the function seems to involve PKA and specifically PRKAR2B. Proposed to act as A kinase-anchoring protein (AKAP) and may mediate crosstalk between Arf and PKA pathways. This is Brefeldin A-inhibited guanine nucleotide-exchange protein 2 (Arfgef2) from Rattus norvegicus (Rat).